The following is a 259-amino-acid chain: UPF0246 protein MADE_1015435 (259 aa).

Belongs to the UPF0246 family.

This Alteromonas mediterranea (strain DSM 17117 / CIP 110805 / LMG 28347 / Deep ecotype) protein is UPF0246 protein MADE_1015435.